A 635-amino-acid chain; its full sequence is Threonine--tRNA ligase (635 aa).

Residues 1–61 (MIKITLKDGK…HKDSSLEILT (61 aa)) form the TGS domain. The segment at 242–532 (DHRKLGKELD…LIEQYAGAFP (291 aa)) is catalytic. The Zn(2+) site is built by C333, H384, and H509.

This sequence belongs to the class-II aminoacyl-tRNA synthetase family. Homodimer. Zn(2+) is required as a cofactor.

It localises to the cytoplasm. The catalysed reaction is tRNA(Thr) + L-threonine + ATP = L-threonyl-tRNA(Thr) + AMP + diphosphate + H(+). Its function is as follows. Catalyzes the attachment of threonine to tRNA(Thr) in a two-step reaction: L-threonine is first activated by ATP to form Thr-AMP and then transferred to the acceptor end of tRNA(Thr). Also edits incorrectly charged L-seryl-tRNA(Thr). The polypeptide is Threonine--tRNA ligase (Clostridium botulinum (strain 657 / Type Ba4)).